Here is a 460-residue protein sequence, read N- to C-terminus: Putative RNA-guided DNA endonuclease MT2953 (460 aa).

Residues Asp224 and Glu313 contribute to the active site. Zn(2+)-binding residues include Cys372, Cys375, Cys389, and Cys392. Asp399 is an active-site residue. A disordered region spans residues 415 to 460 (VVGPVGAAVKRGADRKTGPGPAGGREARKATGHPAGEQPRDGVQVK).

It in the N-terminal section; belongs to the transposase 2 family. In the C-terminal section; belongs to the transposase 35 family.

In terms of biological role, an RNA-guided dsDNA endonuclease. When guided by an RNA derived from the right-end element of its insertion sequence element (IS), cleaves DNA downstream of the transposon-associated motif (TAM). Cleaves supercoiled and linear DNA in a staggered manner 15-21 bases from the TAM yielding 5'-overhangs. Binds reRNA, an approximately 150 nucleotide base sRNA derived from the 3' end of its own gene, the right end (RE) of the insertion sequence (IS) plus sequence downstream of the IS. The polypeptide is Putative RNA-guided DNA endonuclease MT2953 (Mycobacterium tuberculosis (strain CDC 1551 / Oshkosh)).